Reading from the N-terminus, the 454-residue chain is L-cysteine desulfhydrase (454 aa).

A disordered region spans residues 1 to 25 (MEAGERRNGDSMSHNHRAPKKPRLA). The segment covering 14–23 (HNHRAPKKPR) has biased composition (basic residues). Lys257 is modified (N6-(pyridoxal phosphate)lysine).

Belongs to the class-V pyridoxal-phosphate-dependent aminotransferase family. It depends on pyridoxal 5'-phosphate as a cofactor. As to expression, highly expressed in stems and cauline leaves, and at lower levels in roots, rosette leaves and flowers.

The enzyme catalyses L-cysteine + H2O = hydrogen sulfide + pyruvate + NH4(+) + H(+). In terms of biological role, catalyzes the production of hydrogen sulfide (H2S) from cysteine. Is mainly responsible for the degradation of cysteine to generate H2S, a regulator of stomatal movement and closure. The sequence is that of L-cysteine desulfhydrase (LCD) from Arabidopsis thaliana (Mouse-ear cress).